The primary structure comprises 227 residues: 2,3-bisphosphoglycerate-dependent phosphoglycerate mutase (227 aa).

Substrate-binding positions include 7 to 14 (RHGFSEWN), 20 to 21 (TG), R59, 86 to 89 (ERHY), K97, 113 to 114 (RR), and 182 to 183 (GN). H8 serves as the catalytic Tele-phosphohistidine intermediate. E86 acts as the Proton donor/acceptor in catalysis.

The protein belongs to the phosphoglycerate mutase family. BPG-dependent PGAM subfamily. Homodimer.

The enzyme catalyses (2R)-2-phosphoglycerate = (2R)-3-phosphoglycerate. The protein operates within carbohydrate degradation; glycolysis; pyruvate from D-glyceraldehyde 3-phosphate: step 3/5. Functionally, catalyzes the interconversion of 2-phosphoglycerate and 3-phosphoglycerate. This is 2,3-bisphosphoglycerate-dependent phosphoglycerate mutase from Actinobacillus pleuropneumoniae serotype 5b (strain L20).